Here is a 1976-residue protein sequence, read N- to C-terminus: Myosin-10 (1976 aa).

Arginine 18 carries the omega-N-methylarginine modification. The region spanning 31–81 is the Myosin N-terminal SH3-like domain; it reads TAKKLVWIPSERHGFEAASIKEERGDEVMVELAENGKKAMVNKDDIQKMNP. In terms of domain architecture, Myosin motor spans 85-783; that stretch reads SKVEDMAELT…VLAHLEEERD (699 aa). 178–185 serves as a coordination point for ATP; sequence GESGAGKT. Phosphoserine is present on leucine 214. Position 442 is an N6-acetyllysine (lysine 442). The interval 661 to 683 is actin-binding; it reads LTKLMATLRNTNPNFVRCIIPNH. The IQ domain occupies 786–815; it reads ITDIIIFFQAVCRGYLARKAFAKKQQQLSA. Residues 845 to 1976 adopt a coiled-coil conformation; sequence LQVTRQEEEL…VNETQPPQSE (1132 aa). The segment at 1127–1147 is disordered; that stretch reads FESEKASRNKAEKQKRDLSEE. Over residues 1129 to 1147 the composition is skewed to basic and acidic residues; that stretch reads SEKASRNKAEKQKRDLSEE. A Phosphoserine modification is found at serine 1145. N6-acetyllysine occurs at positions 1241, 1301, and 1645. Disordered stretches follow at residues 1697-1728 and 1872-1976; these read ASSE…SALL and MEKA…PQSE. Residues 1698-1708 are compositionally biased toward basic and acidic residues; that stretch reads SSERARRHAEQ. Residue arginine 1930 is modified to Omega-N-methylarginine. Phosphoserine is present on residues serine 1935, serine 1937, serine 1938, and serine 1939. Arginine 1940 is subject to Omega-N-methylarginine. A phosphoserine mark is found at serine 1952 and serine 1956. Threonine 1960 is subject to Phosphothreonine. A compositionally biased stretch (polar residues) spans 1967 to 1976; the sequence is VNETQPPQSE. Residue serine 1975 is modified to Phosphoserine.

This sequence belongs to the TRAFAC class myosin-kinesin ATPase superfamily. Myosin family. In terms of assembly, myosin is a hexameric protein that consists of 2 heavy chain subunits (MHC), 2 alkali light chain subunits (MLC) and 2 regulatory light chain subunits (MLC-2). Interacts with PLEKHG6. Interacts with ECPAS. Interacts with KIF26B. Interacts with LARP6. Interacts with MCC. Interacts with CFAP95. As to quaternary structure, (Microbial infection) Interacts with herpes simplex virus 1/HHV-1 envelope glycoprotein B. In terms of processing, phosphorylated by ABL2. In terms of tissue distribution, isoform 1 is expressed in cerebellum and spinal chord. Isoform 2 is expressed in cerebrum and retina. Isoform 3 is expressed in the cerebrum and to a much lower extent in cerebellum.

The protein localises to the cell projection. It localises to the lamellipodium. Its subcellular location is the cell membrane. Its function is as follows. Cellular myosin that appears to play a role in cytokinesis, cell shape, and specialized functions such as secretion and capping. Involved with LARP6 in the stabilization of type I collagen mRNAs for CO1A1 and CO1A2. During cell spreading, plays an important role in cytoskeleton reorganization, focal contacts formation (in the central part but not the margins of spreading cells), and lamellipodial extension; this function is mechanically antagonized by MYH9. In terms of biological role, (Microbial infection) Acts as a receptor for herpes simplex virus 1/HHV-1 envelope glycoprotein B. The chain is Myosin-10 (MYH10) from Homo sapiens (Human).